The chain runs to 132 residues: Myelin P2 protein (132 aa).

Residue Ser2 is modified to N-acetylserine. (9Z)-octadecenoate-binding positions include Arg107 and Arg127–Tyr129. Residues Arg107 and Arg127 to Tyr129 each bind hexadecanoate.

It belongs to the calycin superfamily. Fatty-acid binding protein (FABP) family. In terms of assembly, monomer.

The protein localises to the cytoplasm. Functionally, may play a role in lipid transport protein in Schwann cells. May bind cholesterol. The protein is Myelin P2 protein (PMP2) of Oryctolagus cuniculus (Rabbit).